Here is a 122-residue protein sequence, read N- to C-terminus: Small ribosomal subunit protein bS6 (122 aa).

The tract at residues 99–122 is disordered; that stretch reads PSPMMKEVAREEAKKAAAQTEQAA.

The protein belongs to the bacterial ribosomal protein bS6 family.

Binds together with bS18 to 16S ribosomal RNA. The polypeptide is Small ribosomal subunit protein bS6 (Ralstonia pickettii (strain 12J)).